We begin with the raw amino-acid sequence, 143 residues long: Transcriptional regulator MraZ (143 aa).

2 consecutive SpoVT-AbrB domains span residues 5 to 47 (EYEH…PRSV) and 76 to 119 (AADM…APRR).

This sequence belongs to the MraZ family. As to quaternary structure, forms oligomers.

The protein resides in the cytoplasm. Its subcellular location is the nucleoid. This Roseiflexus sp. (strain RS-1) protein is Transcriptional regulator MraZ.